Here is a 204-residue protein sequence, read N- to C-terminus: Histone H3-like centromeric protein CSE4 (204 aa).

The tract at residues 68 to 107 is disordered; sequence RVAEPAAAESRADGAREEERAARPARPRETRRIAKKPQRY. Basic and acidic residues predominate over residues 77-99; sequence SRADGAREEERAARPARPRETRR. The interval 89 to 202 is H3-like; that stretch reads ARPARPRETR…MQLARRIRGQ (114 aa).

The protein belongs to the histone H3 family. As to quaternary structure, component of centromeric nucleosomes, where DNA is wrapped around a histone octamer core. The octamer contains two molecules each of H2A, H2B, CSE4/CENPA and H4 assembled in one CSE4-H4 heterotetramer and two H2A-H2B heterodimers. Interacts with the inner kinetochore. Ubiquitinated. Is degraded through ubiquitin-mediated proteolysis when not protected by its association to the kinetochore.

Its subcellular location is the nucleus. It localises to the chromosome. It is found in the centromere. Its function is as follows. Histone H3-like nucleosomal protein that is specifically found in centromeric nucleosomes. Replaces conventional H3 in the nucleosome core of centromeric chromatin that serves as an assembly site for the inner kinetochore. Required for recruitment and assembly of kinetochore proteins, mitotic progression and chromosome segregation. May serve as an epigenetic mark that propagates centromere identity through replication and cell division. The sequence is that of Histone H3-like centromeric protein CSE4 (CSE4) from Eremothecium gossypii (strain ATCC 10895 / CBS 109.51 / FGSC 9923 / NRRL Y-1056) (Yeast).